The primary structure comprises 432 residues: MEKLTLTPISRVEGEINLPGSKSLSNRALLLAALATGTTQVTNLLDSDDIRHMLNALKALGVKYELSDDKTVCVVEGIGGAFKVQNGLSLFLGNAGTAMRPLAAALCLKGAETAQIILTGEPRMKERPIKHLVDALRQVGAEVQYLENEGYPPLAISNSGLQGGKVQIDGSISSQFLTALLMSAPLAESDMEIEIIGDLVSKPYIDITLSMMNDFGITVENRDYKTFLVKGKQGYVAPQGNYLVEGDASSASYFLASGAIKGKVKVTGIGKKSIQGDRLFADVLEKMGAKITWGEDFIQAEQSPLKGVDMDMNHIPDAAMTIATTALFAEGETVIRNIYNWRVKETDRLTAMATELRKVGAEVEEGEDFIRIQPLALENFQHAEIETYNDHRMAMCFSLIALSNTEVTILDPNCTAKTFPTYFRELEKLSVR.

Lys-22, Ser-23, and Arg-27 together coordinate 3-phosphoshikimate. Residue Lys-22 participates in phosphoenolpyruvate binding. Phosphoenolpyruvate is bound by residues Gly-96 and Arg-127. 3-phosphoshikimate is bound by residues Ser-173, Ser-174, Gln-175, Ser-201, Asp-317, Asn-340, and Lys-344. Residue Gln-175 coordinates phosphoenolpyruvate. Catalysis depends on Asp-317, which acts as the Proton acceptor. Phosphoenolpyruvate contacts are provided by Arg-348, Arg-392, and Lys-417.

Belongs to the EPSP synthase family. Monomer.

The protein resides in the cytoplasm. It catalyses the reaction 3-phosphoshikimate + phosphoenolpyruvate = 5-O-(1-carboxyvinyl)-3-phosphoshikimate + phosphate. The protein operates within metabolic intermediate biosynthesis; chorismate biosynthesis; chorismate from D-erythrose 4-phosphate and phosphoenolpyruvate: step 6/7. Functionally, catalyzes the transfer of the enolpyruvyl moiety of phosphoenolpyruvate (PEP) to the 5-hydroxyl of shikimate-3-phosphate (S3P) to produce enolpyruvyl shikimate-3-phosphate and inorganic phosphate. In Mannheimia haemolytica (Pasteurella haemolytica), this protein is 3-phosphoshikimate 1-carboxyvinyltransferase.